The chain runs to 455 residues: Trigger factor (455 aa).

The PPIase FKBP-type domain maps to glycine 169–proline 262.

It belongs to the FKBP-type PPIase family. Tig subfamily.

The protein localises to the cytoplasm. It catalyses the reaction [protein]-peptidylproline (omega=180) = [protein]-peptidylproline (omega=0). In terms of biological role, involved in protein export. Acts as a chaperone by maintaining the newly synthesized protein in an open conformation. Functions as a peptidyl-prolyl cis-trans isomerase. The polypeptide is Trigger factor (Rippkaea orientalis (strain PCC 8801 / RF-1) (Cyanothece sp. (strain PCC 8801))).